The sequence spans 166 residues: Large ribosomal subunit protein uL10 (166 aa).

Belongs to the universal ribosomal protein uL10 family. As to quaternary structure, part of the ribosomal stalk of the 50S ribosomal subunit. The N-terminus interacts with L11 and the large rRNA to form the base of the stalk. The C-terminus forms an elongated spine to which L12 dimers bind in a sequential fashion forming a multimeric L10(L12)X complex.

Forms part of the ribosomal stalk, playing a central role in the interaction of the ribosome with GTP-bound translation factors. This Pseudomonas paraeruginosa (strain DSM 24068 / PA7) (Pseudomonas aeruginosa (strain PA7)) protein is Large ribosomal subunit protein uL10.